The primary structure comprises 785 residues: Endonuclease MutS2 (785 aa).

334–341 serves as a coordination point for ATP; that stretch reads GPNTGGKT. A Smr domain is found at 710-785; it reads LDLRGKRYEE…GNGATIVHFK (76 aa).

This sequence belongs to the DNA mismatch repair MutS family. MutS2 subfamily. Homodimer. Binds to stalled ribosomes, contacting rRNA.

In terms of biological role, endonuclease that is involved in the suppression of homologous recombination and thus may have a key role in the control of bacterial genetic diversity. Functionally, acts as a ribosome collision sensor, splitting the ribosome into its 2 subunits. Detects stalled/collided 70S ribosomes which it binds and splits by an ATP-hydrolysis driven conformational change. Acts upstream of the ribosome quality control system (RQC), a ribosome-associated complex that mediates the extraction of incompletely synthesized nascent chains from stalled ribosomes and their subsequent degradation. Probably generates substrates for RQC. The chain is Endonuclease MutS2 from Pediococcus pentosaceus (strain ATCC 25745 / CCUG 21536 / LMG 10740 / 183-1w).